A 329-amino-acid polypeptide reads, in one-letter code: GTP 3',8-cyclase (329 aa).

Residues 1–229 enclose the Radical SAM core domain; it reads MNPVDYLRIS…TAFVQGNGPA (229 aa). GTP is bound at residue arginine 8. Residues cysteine 15 and cysteine 19 each coordinate [4Fe-4S] cluster. Position 21 (tyrosine 21) interacts with S-adenosyl-L-methionine. Position 22 (cysteine 22) interacts with [4Fe-4S] cluster. Arginine 60 serves as a coordination point for GTP. Glycine 64 lines the S-adenosyl-L-methionine pocket. Threonine 91 contributes to the GTP binding site. Serine 115 contacts S-adenosyl-L-methionine. A GTP-binding site is contributed by lysine 155. Methionine 189 is an S-adenosyl-L-methionine binding site. The [4Fe-4S] cluster site is built by cysteine 252 and cysteine 255. Residue 257–259 participates in GTP binding; it reads RMR. Cysteine 269 is a binding site for [4Fe-4S] cluster.

This sequence belongs to the radical SAM superfamily. MoaA family. In terms of assembly, monomer and homodimer. The cofactor is [4Fe-4S] cluster.

It catalyses the reaction GTP + AH2 + S-adenosyl-L-methionine = (8S)-3',8-cyclo-7,8-dihydroguanosine 5'-triphosphate + 5'-deoxyadenosine + L-methionine + A + H(+). The protein operates within cofactor biosynthesis; molybdopterin biosynthesis. Its function is as follows. Catalyzes the cyclization of GTP to (8S)-3',8-cyclo-7,8-dihydroguanosine 5'-triphosphate. This Picosynechococcus sp. (strain ATCC 27264 / PCC 7002 / PR-6) (Agmenellum quadruplicatum) protein is GTP 3',8-cyclase.